The primary structure comprises 141 residues: Nucleoside diphosphate kinase (141 aa).

Residues lysine 11, phenylalanine 59, arginine 87, threonine 93, arginine 104, and asparagine 114 each coordinate ATP. Histidine 117 (pros-phosphohistidine intermediate) is an active-site residue.

This sequence belongs to the NDK family. In terms of assembly, homotetramer. Mg(2+) is required as a cofactor.

It localises to the cytoplasm. It catalyses the reaction a 2'-deoxyribonucleoside 5'-diphosphate + ATP = a 2'-deoxyribonucleoside 5'-triphosphate + ADP. The catalysed reaction is a ribonucleoside 5'-diphosphate + ATP = a ribonucleoside 5'-triphosphate + ADP. Major role in the synthesis of nucleoside triphosphates other than ATP. The ATP gamma phosphate is transferred to the NDP beta phosphate via a ping-pong mechanism, using a phosphorylated active-site intermediate. This is Nucleoside diphosphate kinase from Pseudomonas fluorescens (strain SBW25).